The sequence spans 442 residues: MINKLYIRTFGCQMNEYDSNKMVDILKHSHDLTLTDDATSADVLLLNTCSIREKAQDKLFHQLGRWSKLKNKNPNLIIGVGGCVASQEGELILKRTPYVDIIFGPQTLHRLPNMLNDALNNKKTSIDISFPEIEKFDHLPKPRTNSVTAFVSIMEGCSKYCTFCIVPYTRGEEISRPFNDVINEVKILASQGVREINLLGQNVNAYQGSMNDGEVSDLALLINIVAKISGIKRIRYTTSHPNQFSDSLIEAYAEVPELVSHLHLPVQSGSDKILRLMKRGYMSIEYKSKIRKLRKIRPDISISSDFIIGFPGENEKDFLDTMILIDEIGFDKSFSFIYSVRPGTPAASYPDDIDIQVKKQRLALIQKTINNNTEHISQLMIGSIQKVLVENITKKGNELFGRTENMRNTHFKGDKSLIGQIVNVKITKGRGNSLMGDLLTQI.

The MTTase N-terminal domain occupies 3–120 (NKLYIRTFGC…LPNMLNDALN (118 aa)). Positions 12, 49, 83, 157, 161, and 164 each coordinate [4Fe-4S] cluster. Residues 143–375 (RTNSVTAFVS…QKTINNNTEH (233 aa)) enclose the Radical SAM core domain. Positions 378–440 (QLMIGSIQKV…GNSLMGDLLT (63 aa)) constitute a TRAM domain.

Belongs to the methylthiotransferase family. MiaB subfamily. Monomer. Requires [4Fe-4S] cluster as cofactor.

The protein localises to the cytoplasm. It catalyses the reaction N(6)-dimethylallyladenosine(37) in tRNA + (sulfur carrier)-SH + AH2 + 2 S-adenosyl-L-methionine = 2-methylsulfanyl-N(6)-dimethylallyladenosine(37) in tRNA + (sulfur carrier)-H + 5'-deoxyadenosine + L-methionine + A + S-adenosyl-L-homocysteine + 2 H(+). Catalyzes the methylthiolation of N6-(dimethylallyl)adenosine (i(6)A), leading to the formation of 2-methylthio-N6-(dimethylallyl)adenosine (ms(2)i(6)A) at position 37 in tRNAs that read codons beginning with uridine. This chain is tRNA-2-methylthio-N(6)-dimethylallyladenosine synthase, found in Vesicomyosocius okutanii subsp. Calyptogena okutanii (strain HA).